Here is a 341-residue protein sequence, read N- to C-terminus: Phosphoribosylformylglycinamidine cyclo-ligase (341 aa).

Belongs to the AIR synthase family.

It is found in the cytoplasm. The catalysed reaction is 2-formamido-N(1)-(5-O-phospho-beta-D-ribosyl)acetamidine + ATP = 5-amino-1-(5-phospho-beta-D-ribosyl)imidazole + ADP + phosphate + H(+). It participates in purine metabolism; IMP biosynthesis via de novo pathway; 5-amino-1-(5-phospho-D-ribosyl)imidazole from N(2)-formyl-N(1)-(5-phospho-D-ribosyl)glycinamide: step 2/2. The chain is Phosphoribosylformylglycinamidine cyclo-ligase from Xanthomonas campestris pv. campestris (strain B100).